The following is a 270-amino-acid chain: MPFEFDVITLLPDMFDAVTQHGVTGRAHKSNLYRLHTWNPRNYAMNHYRTVDDSPYGGGPGMVMMAEPLDKAITDAKARQGEDGVSKTRVIYLSPQGKRLDHKKVLQISQLDGVVLLCGRYEGIDERLIEDQVDEEISIGDYVISGGELAAMVLIDAVVRQLPGALGDTRSAGQDSHTDHLLEYPHYTRPEVHKEKPVPRILLSGDHAKIERWRLQQSIGRTWLKRPDLLAEKYPEGLPDREKELLEEFKQLRYRVVANQLMDNTKEQEQ.

S-adenosyl-L-methionine-binding positions include Gly-119 and 139–144 (IGDYVI).

The protein belongs to the RNA methyltransferase TrmD family. As to quaternary structure, homodimer.

The protein localises to the cytoplasm. The catalysed reaction is guanosine(37) in tRNA + S-adenosyl-L-methionine = N(1)-methylguanosine(37) in tRNA + S-adenosyl-L-homocysteine + H(+). Specifically methylates guanosine-37 in various tRNAs. This chain is tRNA (guanine-N(1)-)-methyltransferase, found in Nitrosomonas europaea (strain ATCC 19718 / CIP 103999 / KCTC 2705 / NBRC 14298).